The following is a 413-amino-acid chain: 1-deoxy-D-xylulose 5-phosphate reductoisomerase (413 aa).

Residues threonine 13, glycine 14, serine 15, isoleucine 16, arginine 40, asparagine 41, and asparagine 127 each contribute to the NADPH site. 1-deoxy-D-xylulose 5-phosphate is bound at residue lysine 128. Glutamate 129 is a binding site for NADPH. Aspartate 153 serves as a coordination point for Mn(2+). 1-deoxy-D-xylulose 5-phosphate is bound by residues serine 154, glutamate 155, serine 184, and histidine 207. Glutamate 155 contacts Mn(2+). Glycine 213 is a binding site for NADPH. Serine 220, asparagine 225, lysine 226, and glutamate 229 together coordinate 1-deoxy-D-xylulose 5-phosphate. Mn(2+) is bound at residue glutamate 229.

The protein belongs to the DXR family. Requires Mg(2+) as cofactor. Mn(2+) is required as a cofactor.

The catalysed reaction is 2-C-methyl-D-erythritol 4-phosphate + NADP(+) = 1-deoxy-D-xylulose 5-phosphate + NADPH + H(+). It functions in the pathway isoprenoid biosynthesis; isopentenyl diphosphate biosynthesis via DXP pathway; isopentenyl diphosphate from 1-deoxy-D-xylulose 5-phosphate: step 1/6. Functionally, catalyzes the NADPH-dependent rearrangement and reduction of 1-deoxy-D-xylulose-5-phosphate (DXP) to 2-C-methyl-D-erythritol 4-phosphate (MEP). The chain is 1-deoxy-D-xylulose 5-phosphate reductoisomerase from Nitrosomonas europaea (strain ATCC 19718 / CIP 103999 / KCTC 2705 / NBRC 14298).